The following is a 58-amino-acid chain: Small ribosomal subunit protein bS21 (58 aa).

Residues 30–58 form a disordered region; the sequence is SEVRKREHYEKPSVKRKKKSEAARKRKFK. The span at 31 to 42 shows a compositional bias: basic and acidic residues; the sequence is EVRKREHYEKPS. Residues 43–58 show a composition bias toward basic residues; it reads VKRKKKSEAARKRKFK.

It belongs to the bacterial ribosomal protein bS21 family.

This Clostridium perfringens (strain ATCC 13124 / DSM 756 / JCM 1290 / NCIMB 6125 / NCTC 8237 / Type A) protein is Small ribosomal subunit protein bS21.